We begin with the raw amino-acid sequence, 538 residues long: uncharacterized protein (538 aa).

A compositionally biased stretch (low complexity) spans 1–13 (MYNNNSSTSSDSS). A disordered region spans residues 1-43 (MYNNNSSTSSDSSNSEEKANAQHASSTDSTSEHTDPAVADEGF). 12 consecutive transmembrane segments (helical) span residues 97–117 (ILHVALLAFTTLTASWGSSVF), 134–154 (VALLGMSLYVCGFASGPILWA), 163–183 (KIPLIVGMFMFSIFSIAVAVA), 194–214 (FFSGFCASSPLSVVAAAFADM), 226–246 (IFACITFAGPLIGPIAGGFLA), 254–274 (WTEYITSFMGFFSTLCLLFMK), 328–348 (PIVFLLTLYMSFVYGILYLLL), 367–387 (ALPYIGLLVGVILGAALIAYF), 408–428 (LPPMMIGSVLFPAGIFWLAWS), 434–454 (VHWIVPTLSGLLTGCGILTIF), 458–478 (LIYLIDAYLFRAASVIAANTI), and 504–524 (GSLLGFIATALIPIPTLFFIF).

It belongs to the major facilitator superfamily. CAR1 family.

The protein resides in the endoplasmic reticulum. The protein localises to the membrane. This is an uncharacterized protein from Schizosaccharomyces pombe (strain 972 / ATCC 24843) (Fission yeast).